The chain runs to 333 residues: Chitinase-like protein 2 (333 aa).

The signal sequence occupies residues 1–27 (MVSKPLFSLLLLTVALVVFQTGTLVNA). A disulfide bridge connects residues Cys-50 and Cys-56. Asn-65 carries N-linked (GlcNAc...) asparagine glycosylation. Cys-165 and Cys-175 are joined by a disulfide. Residues Asn-216 and Asn-252 are each glycosylated (N-linked (GlcNAc...) asparagine). Residues Cys-275 and Cys-313 are joined by a disulfide bond. A disordered region spans residues 307–333 (PHEKLSCADQEPFSSSSSAPPSSGSSS). Residues 320-333 (SSSSSAPPSSGSSS) show a composition bias toward low complexity.

Belongs to the glycosyl hydrolase 19 family. In terms of tissue distribution, mostly expressed in stems, especially in xylem and interfascicular fibers.

It is found in the secreted. Its function is as follows. No chitinase activity. Required for proper cell wall biosynthesis in etiolated seedlings. Prevents lignin accumulation in hypocotyls. This is Chitinase-like protein 2 (CTL2) from Arabidopsis thaliana (Mouse-ear cress).